Reading from the N-terminus, the 216-residue chain is 3-isopropylmalate dehydratase small subunit (216 aa).

Belongs to the LeuD family. LeuD type 1 subfamily. In terms of assembly, heterodimer of LeuC and LeuD.

It catalyses the reaction (2R,3S)-3-isopropylmalate = (2S)-2-isopropylmalate. It functions in the pathway amino-acid biosynthesis; L-leucine biosynthesis; L-leucine from 3-methyl-2-oxobutanoate: step 2/4. In terms of biological role, catalyzes the isomerization between 2-isopropylmalate and 3-isopropylmalate, via the formation of 2-isopropylmaleate. This Acidovorax ebreus (strain TPSY) (Diaphorobacter sp. (strain TPSY)) protein is 3-isopropylmalate dehydratase small subunit.